The following is a 1342-amino-acid chain: DNA-directed RNA polymerase subunit beta (1342 aa).

It belongs to the RNA polymerase beta chain family. As to quaternary structure, the RNAP catalytic core consists of 2 alpha, 1 beta, 1 beta' and 1 omega subunit. When a sigma factor is associated with the core the holoenzyme is formed, which can initiate transcription.

It carries out the reaction RNA(n) + a ribonucleoside 5'-triphosphate = RNA(n+1) + diphosphate. In terms of biological role, DNA-dependent RNA polymerase catalyzes the transcription of DNA into RNA using the four ribonucleoside triphosphates as substrates. The polypeptide is DNA-directed RNA polymerase subunit beta (Erwinia tasmaniensis (strain DSM 17950 / CFBP 7177 / CIP 109463 / NCPPB 4357 / Et1/99)).